A 199-amino-acid polypeptide reads, in one-letter code: Recombination protein RecR (199 aa).

The C4-type zinc finger occupies 57–72 (CSICGNITEDDPCVIC). The region spanning 80-176 (STVLVVEEAK…KVTRLAHGLS (97 aa)) is the Toprim domain.

It belongs to the RecR family.

May play a role in DNA repair. It seems to be involved in an RecBC-independent recombinational process of DNA repair. It may act with RecF and RecO. The protein is Recombination protein RecR of Lactiplantibacillus plantarum (strain ATCC BAA-793 / NCIMB 8826 / WCFS1) (Lactobacillus plantarum).